Consider the following 211-residue polypeptide: UPF0637 protein Bsph_1379 (211 aa).

It belongs to the UPF0637 family.

This Lysinibacillus sphaericus (strain C3-41) protein is UPF0637 protein Bsph_1379.